Reading from the N-terminus, the 805-residue chain is Chloride channel protein (805 aa).

At 1-48 (MSHEKNEASGYPEAQSWKSQEAMLGARTEVSRWRAVKNCLYRHLVKVL) the chain is on the cytoplasmic side. Transmembrane regions (helical) follow at residues 49–86 (GEDW…LFAL) and 93–116 (LQYL…CQIV). Residues 122–126 (GSGIP) carry the Selectivity filter part_1 motif. Ser-123 serves as a coordination point for chloride. The segment at residues 125-132 (IPELKTII) is an intramembrane region (helical). 2 helical membrane-spanning segments follow: residues 141-159 (LTLR…ALSA) and 166-184 (EGPF…NQLL). Residues 164-168 (GKEGP) carry the Selectivity filter part_2 motif. Intramembrane regions (helical) lie at residues 201 to 213 (ILTV…ISCC) and 217 to 225 (PLAGVLFSI). 3 helical membrane-spanning segments follow: residues 237–256 (YWRG…VLSV), 283–311 (MPAF…IVFM), and 320–339 (ILKK…LATL). A glycan (N-linked (GlcNAc...) asparagine) is linked at Asn-365. The next 2 membrane-spanning stretches (helical) occupy residues 388 to 408 (LNIF…AALA) and 416 to 439 (GAFV…MALL). The short motif at 416–420 (GAFVP) is the Selectivity filter part_3 element. Phe-418 lines the chloride pocket. The segment at residues 456-470 (GEYAVIGAAAMTGAV) is an intramembrane region (helical). Residues 471–472 (TH) constitute an intramembrane region (note=Loop between two helices). Positions 473 to 484 (AVSTAVICFELT) form an intramembrane region, helical. An intramembrane region (note=Loop between two helices) is located at residues 485-489 (GQISH). A helical membrane pass occupies residues 490–507 (VLPMMVAVILANMVAQGL). Residues 508–805 (QPSLYDSIIQ…RTATSNSSGK (298 aa)) lie on the Cytoplasmic side of the membrane. A chloride-binding site is contributed by Tyr-512. The region spanning 543 to 601 (MVRDVTSIASTSTYGDLLHVLRQTKLKFFPFVDTPDTNTLLGSIDRTEVEGLLQRRISA) is the CBS 1 domain. Disordered stretches follow at residues 606–625 (PAAA…GASF) and 653–684 (KVQT…QKGT). One can recognise a CBS 2 domain in the interval 719 to 776 (IDQSPFQLVEGTSLQKTHTLFSLLGLDRAYVTSMGKLVGVVALAEIQAAIEGSYQKGF).

This sequence belongs to the chloride channel (TC 2.A.49) family. ClC-0 subfamily. Homodimer. Each subunit contains a channel ('Double barreled channel').

The protein localises to the membrane. Voltage-gated chloride channel. This channel is thought to ensure the high conductance of the non-innervated membrane of the electrocyte necessary for efficient current generation caused by sodium influx through the acetylcholine receptor at the innervated membrane. The polypeptide is Chloride channel protein (Torpedo marmorata (Marbled electric ray)).